A 110-amino-acid polypeptide reads, in one-letter code: UPF0122 protein SERP0802 (110 aa).

Belongs to the UPF0122 family.

Its function is as follows. Might take part in the signal recognition particle (SRP) pathway. This is inferred from the conservation of its genetic proximity to ftsY/ffh. May be a regulatory protein. The chain is UPF0122 protein SERP0802 from Staphylococcus epidermidis (strain ATCC 35984 / DSM 28319 / BCRC 17069 / CCUG 31568 / BM 3577 / RP62A).